Consider the following 440-residue polypeptide: Endoplasmic reticulum junction formation protein lunapark (440 aa).

At 1–45 (MGALLAKWRAKPSTVEVLEKMEKDIQSLEEFRDKNQKLRKIWVAR) the chain is on the cytoplasmic side. Residues 16–40 (EVLEKMEKDIQSLEEFRDKNQKLRK) adopt a coiled-coil conformation. The helical transmembrane segment at 46–66 (LFFYSTILYILTSLTVYLWYL) threads the bilayer. Residues 67–77 (PGGMTARLLTT) are Lumenal-facing. A helical transmembrane segment spans residues 78-98 (LLFLLFPVLIWFVRTLLILWF). Residues 99–440 (SRRTERNNDA…ESEESFMETE (342 aa)) lie on the Cytoplasmic side of the membrane. The stretch at 100-128 (RRTERNNDALELLKAEKKKILEEVMEKET) forms a coiled coil. The segment at 149 to 169 (LELPVPGPPITPRPGQDLRQR) is disordered. Thr-159 carries the post-translational modification Phosphothreonine. Phosphoserine is present on residues Ser-177, Ser-179, Ser-188, and Ser-192. Residue Thr-198 is modified to Phosphothreonine. The segment at 202 to 247 (QRDTSAPGGPPERSVQPTPQSNILQRRPGSPATAVSGMALHPPGPP) is disordered. Residues Ser-206 and Ser-215 each carry the phosphoserine modification. Over residues 216-225 (VQPTPQSNIL) the composition is skewed to polar residues. A Phosphothreonine modification is found at Thr-219. Ser-222 and Ser-231 each carry phosphoserine. The segment at 280–305 (CQQCFSHNGMALKEEFEYVAFRCAYC) adopts a C4-type; plays a role in ER morphology zinc-finger fold. Residues 316–440 (PQAPRLQEIS…ESEESFMETE (125 aa)) form a disordered region. Ser-325 is modified (phosphoserine). Over residues 334-343 (DSQGSVNTLQ) the composition is skewed to polar residues. 2 stretches are compositionally biased toward acidic residues: residues 370–411 (QAIE…DDTE) and 431–440 (ESEESFMETE).

Belongs to the lunapark family. Homodimer; homodimerization requires the C4-type zinc finger motif and decreases during mitosis in a phosphorylation-dependent manner. Phosphorylated. Phosphorylation at Thr-159 and Ser-325 occurs during interphase. Phosphorylation at Ser-177, Ser-179, Ser-188, Ser-192, Thr-198, Ser-206, Ser-215, Thr-219, Ser-222 and Ser-231 occurs during mitosis; these phosphorylations reduce both its homodimerization and the ER three-way tubular junction formation.

It is found in the endoplasmic reticulum membrane. Functionally, endoplasmic reticulum (ER)-shaping membrane protein that plays a role in determining ER morphology. Involved in the stabilization of nascent three-way ER tubular junctions within the ER network. May also play a role as a curvature-stabilizing protein within three-way ER tubular junction network. In Xenopus laevis (African clawed frog), this protein is Endoplasmic reticulum junction formation protein lunapark (lnpk).